A 538-amino-acid polypeptide reads, in one-letter code: MYGGEEFGNSDFYDDYAHTGDPALDLEYERNFYANRMPENVKYFLMNFCQAIKEGNLYDIQNMYENTFPQISDHHFDKTAWPDEQEVGAIVDNDKVFLILYKELYYRHIHARIPGGPKLEQRINSFFNYCDFFNLIISAQNPVMLELPDIWLWELVDEFVYQFQNFAQYRARLTDKSQDEIQQLCVNHSNVWSILCILNVLHSLVDISNIKKQLEAISQGIDPQTVAGDFGKLAFYKMLGYFSLVGLLRVHSLLGDYYQAIKVLEPIEIHKKSAYSHIPACQISTSYYVGFAYMMMRRYADAIRTFSDILLYIQRTKQLYSTRSYQNDQINKQAEQMYHLLAICLVLHPQCIDESIQQVLREKNYHDAMFKMQCGDLEVFKSFFVFACPRFVSPCPPAADAPMEDYVKDPMEHQLLVFMDEVRQQKDLPTTRSYLKLYTTLPLTKLASFIDPNASEDDVSKLLIRLLCFKHKMRNLVWSKGPSGLEGTFKSGSELDFYIDDDMIHIADTKVSHRYGDFFVRKIMKFNDLNRKLKNINI.

Positions 305-513 constitute a PCI domain; that stretch reads TFSDILLYIQ…IHIADTKVSH (209 aa).

The protein belongs to the eIF-3 subunit L family. Component of the eukaryotic translation initiation factor 3 (eIF-3) complex. The eIF-3 complex interacts with pix.

The protein resides in the cytoplasm. Functionally, component of the eukaryotic translation initiation factor 3 (eIF-3) complex, which is involved in protein synthesis of a specialized repertoire of mRNAs and, together with other initiation factors, stimulates binding of mRNA and methionyl-tRNAi to the 40S ribosome. The eIF-3 complex specifically targets and initiates translation of a subset of mRNAs involved in cell proliferation. The sequence is that of Eukaryotic translation initiation factor 3 subunit L from Drosophila virilis (Fruit fly).